The chain runs to 261 residues: Small ribosomal subunit protein eS4z (261 aa).

The S4 RNA-binding domain maps to 42 to 104; that stretch reads LPLVLIIRNR…TNENFRLLYD (63 aa).

Belongs to the eukaryotic ribosomal protein eS4 family.

It is found in the cytoplasm. The protein is Small ribosomal subunit protein eS4z (RPS4A) of Arabidopsis thaliana (Mouse-ear cress).